The chain runs to 357 residues: MPQTLHVHSRVKDYDILFTDHVLKTLADCLGERKQRKLLFITDQTVYHLYQTLFEEFAQQYNAFVHVCPPGGQSKSLERVSAIYDQLIAENFSKKDMIITIGGGVVGDLGGFVAATYYRGIPYIQIPTTLLSQVDSSIGGKVGVHFKGLTNMIGSIYPPEAIIISTIFLETLPQREFSCGISEMLKIGFIHDKPLFQQLRDFQKETDKQGLERLIYQSISNKKRIVEQDEFENGLRMSLNFGHTLGHAIESLCHHDFYHHGEAIAIGMVVDAKLAVSKGLLPKEDLDSLLQVFERYQLPTSLERADVSATSLFDVFKTDKKNSEQHIIFILPTETGFTTLAINKDDHQFVEKLDSLL.

NAD(+) contacts are provided by residues 104–108 (GVVGD), 128–129 (TT), Lys141, and 168–171 (FLET). 3 residues coordinate Zn(2+): Glu183, His243, and His260.

Belongs to the sugar phosphate cyclases superfamily. Dehydroquinate synthase family. Requires NAD(+) as cofactor. Co(2+) serves as cofactor. It depends on Zn(2+) as a cofactor.

It is found in the cytoplasm. It catalyses the reaction 7-phospho-2-dehydro-3-deoxy-D-arabino-heptonate = 3-dehydroquinate + phosphate. It participates in metabolic intermediate biosynthesis; chorismate biosynthesis; chorismate from D-erythrose 4-phosphate and phosphoenolpyruvate: step 2/7. Functionally, catalyzes the conversion of 3-deoxy-D-arabino-heptulosonate 7-phosphate (DAHP) to dehydroquinate (DHQ). This chain is 3-dehydroquinate synthase, found in Streptococcus pyogenes serotype M6 (strain ATCC BAA-946 / MGAS10394).